The primary structure comprises 498 residues: ATP synthase subunit beta, chloroplastic (498 aa).

Position 172-179 (172-179 (GGAGVGKT)) interacts with ATP.

This sequence belongs to the ATPase alpha/beta chains family. As to quaternary structure, F-type ATPases have 2 components, CF(1) - the catalytic core - and CF(0) - the membrane proton channel. CF(1) has five subunits: alpha(3), beta(3), gamma(1), delta(1), epsilon(1). CF(0) has four main subunits: a(1), b(1), b'(1) and c(9-12).

Its subcellular location is the plastid. It is found in the chloroplast thylakoid membrane. It catalyses the reaction ATP + H2O + 4 H(+)(in) = ADP + phosphate + 5 H(+)(out). In terms of biological role, produces ATP from ADP in the presence of a proton gradient across the membrane. The catalytic sites are hosted primarily by the beta subunits. The polypeptide is ATP synthase subunit beta, chloroplastic (Lemna minor (Common duckweed)).